Consider the following 306-residue polypeptide: Recombination-associated protein RdgC (306 aa).

This sequence belongs to the RdgC family.

It localises to the cytoplasm. The protein resides in the nucleoid. In terms of biological role, may be involved in recombination. This chain is Recombination-associated protein RdgC, found in Pseudomonas putida (strain ATCC 47054 / DSM 6125 / CFBP 8728 / NCIMB 11950 / KT2440).